The primary structure comprises 621 residues: Auxin response factor 13 (621 aa).

The segment at residues 124–228 (FSKILTASDV…ELRFGIRRAK (105 aa)) is a DNA-binding region (TF-B3). The 93-residue stretch at 508-600 (RSRIKVHMQG…EIKKMKLKNK (93 aa)) folds into the PB1 domain.

This sequence belongs to the ARF family. In terms of assembly, homodimers and heterodimers.

The protein resides in the nucleus. Functionally, auxin response factors (ARFs) are transcriptional factors that bind specifically to the DNA sequence 5'-TGTCTC-3' found in the auxin-responsive promoter elements (AuxREs). Could act as transcriptional activator or repressor. Formation of heterodimers with Aux/IAA proteins may alter their ability to modulate early auxin response genes expression. The protein is Auxin response factor 13 (ARF13) of Arabidopsis thaliana (Mouse-ear cress).